A 316-amino-acid chain; its full sequence is L-lactate dehydrogenase 3 (316 aa).

Residues Val16, Asp37, Arg42, and Tyr68 each contribute to the NAD(+) site. Arg91 provides a ligand contact to substrate. Residues Ser104, 121–123 (ASN), and Thr146 each bind NAD(+). 123–126 (NPVD) serves as a coordination point for substrate. 151 to 154 (DSSR) contributes to the substrate binding site. Arg156 and His171 together coordinate beta-D-fructose 1,6-bisphosphate. His178 serves as the catalytic Proton acceptor. Thr233 contacts substrate.

Belongs to the LDH/MDH superfamily. LDH family. Homotetramer.

The protein resides in the cytoplasm. The catalysed reaction is (S)-lactate + NAD(+) = pyruvate + NADH + H(+). The protein operates within fermentation; pyruvate fermentation to lactate; (S)-lactate from pyruvate: step 1/1. Allosterically activated by fructose 1,6-bisphosphate (FBP). In terms of biological role, catalyzes the conversion of lactate to pyruvate. This chain is L-lactate dehydrogenase 3, found in Bacillus cereus (strain ATCC 10987 / NRS 248).